A 173-amino-acid polypeptide reads, in one-letter code: NADH-ubiquinone oxidoreductase chain 6 (173 aa).

5 helical membrane passes run 1–21 (MTYF…AVAS), 27–47 (YGVV…LSLG), 48–68 (VSFV…VVFV), 87–107 (VVGY…VGGL), and 139–159 (CGVG…FVVL).

It belongs to the complex I subunit 6 family.

It is found in the mitochondrion membrane. It catalyses the reaction a ubiquinone + NADH + 5 H(+)(in) = a ubiquinol + NAD(+) + 4 H(+)(out). Its function is as follows. Core subunit of the mitochondrial membrane respiratory chain NADH dehydrogenase (Complex I) that is believed to belong to the minimal assembly required for catalysis. Complex I functions in the transfer of electrons from NADH to the respiratory chain. The immediate electron acceptor for the enzyme is believed to be ubiquinone. The protein is NADH-ubiquinone oxidoreductase chain 6 (MT-ND6) of Synthliboramphus wumizusume (Japanese murrelet).